The chain runs to 260 residues: Histidinol-phosphatase (260 aa).

Residues E67, D83, I85, and D86 each coordinate Mg(2+). Residue E67 participates in substrate binding. Substrate is bound by residues I85–T88, R185, and D213. D213 is a binding site for Mg(2+).

Belongs to the inositol monophosphatase superfamily. The cofactor is Mg(2+).

The enzyme catalyses L-histidinol phosphate + H2O = L-histidinol + phosphate. The protein operates within amino-acid biosynthesis; L-histidine biosynthesis; L-histidine from 5-phospho-alpha-D-ribose 1-diphosphate: step 8/9. Functionally, catalyzes the dephosphorylation of histidinol-phosphate to histidinol, the direct precursor of histidine. This chain is Histidinol-phosphatase (hisN), found in Mycobacterium tuberculosis (strain ATCC 25618 / H37Rv).